The sequence spans 344 residues: Beta-hexosaminidase (344 aa).

Residues D60, R68, R132, and 162–163 each bind substrate; that span reads KH. Residue H175 is the Proton donor/acceptor of the active site. Catalysis depends on D247, which acts as the Nucleophile.

The protein belongs to the glycosyl hydrolase 3 family. NagZ subfamily.

It is found in the cytoplasm. It catalyses the reaction Hydrolysis of terminal non-reducing N-acetyl-D-hexosamine residues in N-acetyl-beta-D-hexosaminides.. Its pathway is cell wall biogenesis; peptidoglycan recycling. Functionally, plays a role in peptidoglycan recycling by cleaving the terminal beta-1,4-linked N-acetylglucosamine (GlcNAc) from peptide-linked peptidoglycan fragments, giving rise to free GlcNAc, anhydro-N-acetylmuramic acid and anhydro-N-acetylmuramic acid-linked peptides. The chain is Beta-hexosaminidase from Haemophilus ducreyi (strain 35000HP / ATCC 700724).